A 44-amino-acid polypeptide reads, in one-letter code: Photosystem I reaction center subunit IX (44 aa).

The chain crosses the membrane as a helical span at residues 7–27 (YLSVAPVLSTLWFGALAGLLI).

It belongs to the PsaJ family.

Its subcellular location is the plastid. It is found in the chloroplast thylakoid membrane. Its function is as follows. May help in the organization of the PsaE and PsaF subunits. This is Photosystem I reaction center subunit IX from Eucalyptus globulus subsp. globulus (Tasmanian blue gum).